The following is a 246-amino-acid chain: Ribonuclease 3 (246 aa).

An RNase III domain is found at 18–147 (FQELQKKIGI…FIGALYLDQG (130 aa)). E60 is a Mg(2+) binding site. D64 is a catalytic residue. Mg(2+) is bound by residues D133 and E136. The active site involves E136. One can recognise a DRBM domain in the interval 173 to 242 (DFKSQLQELV…AQMALETLRA (70 aa)).

It belongs to the ribonuclease III family. As to quaternary structure, homodimer. Mg(2+) serves as cofactor.

It localises to the cytoplasm. The enzyme catalyses Endonucleolytic cleavage to 5'-phosphomonoester.. Its function is as follows. Digests double-stranded RNA. Involved in the processing of primary rRNA transcript to yield the immediate precursors to the large and small rRNAs (23S and 16S). Processes some mRNAs, and tRNAs when they are encoded in the rRNA operon. Processes pre-crRNA and tracrRNA of type II CRISPR loci if present in the organism. The protein is Ribonuclease 3 of Geobacillus thermodenitrificans (strain NG80-2).